Reading from the N-terminus, the 451-residue chain is Probable D-serine dehydratase (451 aa).

At K119 the chain carries N6-(pyridoxal phosphate)lysine.

This sequence belongs to the serine/threonine dehydratase family. DsdA subfamily. Requires pyridoxal 5'-phosphate as cofactor.

The enzyme catalyses D-serine = pyruvate + NH4(+). This is Probable D-serine dehydratase from Acidovorax ebreus (strain TPSY) (Diaphorobacter sp. (strain TPSY)).